The chain runs to 306 residues: MTLNGGSGAGGSRSAGRERDRRRGSTPWGPAPPLHRRSMPVDERDLQAALTPGSLAATAAGTRTQGQRLDWPEGSSDSLSSGDSGSEDGVYKVHAAGAPGVGKSALARIFGGVEDGPEAEAAGHTYDRSITVDGEEASLMVYDIWEQDGGCWLPGHCMAMGDAYVIVYSITDKGSFEKASELRVQLRARRQTDVPIILVGNKSDLVRSREVSVDEGRACAEVFDCKFIETSAALHHNVQALFEGVVRQIRLRRDSKEDNARRQAGTRRRESLGKKAKLFLGRIVARNSRKMAFLAKSKSCHDLSVL.

A compositionally biased stretch (gly residues) spans 1 to 13 (MTLNGGSGAGGSR). Residues 1–91 (MTLNGGSGAG…GDSGSEDGVY (91 aa)) are disordered. Omega-N-methylarginine is present on arginine 23. Phosphoserine is present on serine 25. The span at 56-88 (AATAAGTRTQGQRLDWPEGSSDSLSSGDSGSED) shows a compositional bias: low complexity. Residues 97–104 (GAPGVGKS) and 201–204 (NKSD) contribute to the GTP site. Positions 276-295 (AKLFLGRIVARNSRKMAFLA) are calmodulin-binding.

This sequence belongs to the small GTPase superfamily. RGK family. As to quaternary structure, interacts with Calmodulin preferentially in the inactive, GDP-bound form. Interacts with CAMK2D. Interacts with CACNB2; interaction may be involved in beta-adrenergic regulation of heart rate and contractile force. Interaction with CACNB2 regulates the trafficking of CACNA1C to the cell membrane.

It is found in the cell membrane. Its function is as follows. May regulate basal voltage-dependent L-type Ca(2+) currents and be required for beta-adrenergic augmentation of Ca(2+) influx in cardiomyocytes, thereby regulating increases in heart rate and contractile force. May play an important role in cardiac antiarrhythmia via the strong suppression of voltage-dependent L-type Ca(2+) currents. Regulates voltage-gated L-type calcium channel subunit alpha-1C trafficking to the cell membrane. Inhibits cardiac hypertrophy through the calmodulin-dependent kinase II (CaMKII) pathway. Inhibits phosphorylation and activation of CAMK2D. In Rattus norvegicus (Rat), this protein is GTP-binding protein RAD (Rrad).